We begin with the raw amino-acid sequence, 100 residues long: Small ribosomal subunit protein uS14c (100 aa).

This sequence belongs to the universal ribosomal protein uS14 family. Part of the 30S ribosomal subunit.

The protein localises to the plastid. The protein resides in the chloroplast. Functionally, binds 16S rRNA, required for the assembly of 30S particles. In Angiopteris evecta (Mule's foot fern), this protein is Small ribosomal subunit protein uS14c.